Reading from the N-terminus, the 93-residue chain is Acylphosphatase (93 aa).

Positions 7-93 constitute an Acylphosphatase-like domain; the sequence is RLTAWVHGRV…ADAIAGFTER (87 aa). Residues Arg-22 and Asn-40 contribute to the active site.

This sequence belongs to the acylphosphatase family.

The enzyme catalyses an acyl phosphate + H2O = a carboxylate + phosphate + H(+). The polypeptide is Acylphosphatase (acyP) (Mycolicibacterium vanbaalenii (strain DSM 7251 / JCM 13017 / BCRC 16820 / KCTC 9966 / NRRL B-24157 / PYR-1) (Mycobacterium vanbaalenii)).